The sequence spans 102 residues: Protein translation factor SUI1 homolog (102 aa).

This sequence belongs to the SUI1 family.

The chain is Protein translation factor SUI1 homolog from Methanosarcina mazei (strain ATCC BAA-159 / DSM 3647 / Goe1 / Go1 / JCM 11833 / OCM 88) (Methanosarcina frisia).